A 398-amino-acid chain; its full sequence is Ubiquitin carboxyl-terminal hydrolase 17-like protein 6 (398 aa).

The USP domain maps to 80 to 375 (AGLQNMGNTC…QAYVLFYIQK (296 aa)). Cysteine 89 functions as the Nucleophile in the catalytic mechanism. Catalysis depends on histidine 334, which acts as the Proton acceptor.

It belongs to the peptidase C19 family. USP17 subfamily.

Its subcellular location is the nucleus. It localises to the cytoplasm. The enzyme catalyses Thiol-dependent hydrolysis of ester, thioester, amide, peptide and isopeptide bonds formed by the C-terminal Gly of ubiquitin (a 76-residue protein attached to proteins as an intracellular targeting signal).. In terms of biological role, deubiquitinating enzyme that removes conjugated ubiquitin from specific proteins to regulate different cellular processes that may include cell proliferation, progression through the cell cycle, cell migration, and the cellular response to viral infection. Seems to be non-functional in the regulation of apoptosis. The sequence is that of Ubiquitin carboxyl-terminal hydrolase 17-like protein 6 (USP17L6P) from Homo sapiens (Human).